Consider the following 419-residue polypeptide: Testin (419 aa).

The region spanning 92-199 (MILTNPVAAK…GDVKLPSEMN (108 aa)) is the PET domain. Disordered stretches follow at residues 133-164 (EKQP…PSKC) and 199-222 (NAQG…GSKD). The segment covering 155–164 (PAHDQDPSKC) has biased composition (basic and acidic residues). 3 LIM zinc-binding domains span residues 232–295 (YSCY…CDSE), 297–357 (PRCA…NHAV), and 360–419 (QGCH…KMMS).

The protein belongs to the prickle / espinas / testin family. As to quaternary structure, interacts via LIM domain 1 with ZYX. Interacts (via LIM domain 3) with ENAH and VASP. Interacts with ALKBH4, talin, actin, alpha-actinin, GRIP1 and PXN. Interacts (via LIM domain 2) with ACTL7A (via N-terminus). Heterodimer with ACTL7A; the heterodimer interacts with ENAH to form a heterotrimer.

Its subcellular location is the cytoplasm. It is found in the cell junction. It localises to the focal adhesion. In terms of biological role, scaffold protein that may play a role in cell adhesion, cell spreading and in the reorganization of the actin cytoskeleton. Plays a role in the regulation of cell proliferation. May act as a tumor suppressor. This chain is Testin (Tes), found in Rattus norvegicus (Rat).